The primary structure comprises 678 residues: Macrolide export ATP-binding/permease protein MacB 1 (678 aa).

The ABC transporter domain occupies 11-249 (LRLENVSREF…PKMVDIPSVI (239 aa)). ATP is bound at residue 47 to 54 (GTSGSGKS). The next 4 helical transmembrane spans lie at 303–323 (ALTM…VALG), 558–578 (IAVI…LVSV), 608–628 (LVCL…GLLF), and 641–661 (AASI…FGFF).

This sequence belongs to the ABC transporter superfamily. Macrolide exporter (TC 3.A.1.122) family. In terms of assembly, homodimer. Part of the tripartite efflux system MacAB-TolC, which is composed of an inner membrane transporter, MacB, a periplasmic membrane fusion protein, MacA, and an outer membrane component, TolC. The complex forms a large protein conduit and can translocate molecules across both the inner and outer membranes. Interacts with MacA.

It is found in the cell inner membrane. In terms of biological role, part of the tripartite efflux system MacAB-TolC. MacB is a non-canonical ABC transporter that contains transmembrane domains (TMD), which form a pore in the inner membrane, and an ATP-binding domain (NBD), which is responsible for energy generation. Confers resistance against macrolides. The polypeptide is Macrolide export ATP-binding/permease protein MacB 1 (Yersinia pestis bv. Antiqua (strain Nepal516)).